The chain runs to 377 residues: MTKKYVALIFGGNSSEHDVSKRSAQNFYDAILATGKYRITVFAIAQNGYVLDPERSKRILALEDERPIVADYMTTVDQQDPLSRINALRAAGDFDIFFPVVHGNLGEDGTLQGLFKLLNKPYVGAPLRGHAVSFDKVLTKELLTVNNIRNTKYIVVDEKTAKTLTWAQVVKDLGDVVFVKAANQGSSVGVSRAKTADEFEAALTDSFQYDYKVLIEAAVKGPRELEVGVIGNEDPIVSEIGAHHVPNQGDGDAWYDYNNKFVDNSSVQFEIPANLPDAVTAEVKDMALKAYKVLDLRGEARMDFLLDENNVPYLGEPNTLPGFTNMSLFKRLWDYSDIDNVELVDKLIDYGFAEFEKNAQLSYEFVSLGEEKIGKFN.

Residues 140–349 (KELLTVNNIR…NVELVDKLID (210 aa)) enclose the ATP-grasp domain. An ATP-binding site is contributed by 170 to 225 (VKDLGDVVFVKAANQGSSVGVSRAKTADEFEAALTDSFQYDYKVLIEAAVKGPREL). D303, E316, and N318 together coordinate Mg(2+).

It belongs to the D-alanine--D-alanine ligase family. Requires Mg(2+) as cofactor. It depends on Mn(2+) as a cofactor.

The protein resides in the cytoplasm. It catalyses the reaction 2 D-alanine + ATP = D-alanyl-D-alanine + ADP + phosphate + H(+). It participates in cell wall biogenesis; peptidoglycan biosynthesis. Its function is as follows. Cell wall formation. The chain is D-alanine--D-alanine ligase from Leuconostoc citreum (strain KM20).